A 144-amino-acid polypeptide reads, in one-letter code: Putative 2'-deoxynucleoside 5'-phosphate N-hydrolase 1 (144 aa).

Residues 7–13 (YFCGSIR), tyrosine 22, histidine 39, glutamate 83, and 107–109 (SGM) contribute to the substrate site.

The protein belongs to the 2'-deoxynucleoside 5'-phosphate N-hydrolase 1 family. As to quaternary structure, monomer and homodimer.

It is found in the cytoplasm. The protein resides in the nucleus. It catalyses the reaction a pyrimidine 2'-deoxyribonucleoside 5'-phosphate + H2O = a pyrimidine nucleobase + 2-deoxy-D-ribose 5-phosphate. The enzyme catalyses a purine 2'-deoxyribonucleoside 5'-phosphate + H2O = a purine nucleobase + 2-deoxy-D-ribose 5-phosphate. Catalyzes the cleavage of the N-glycosidic bond of deoxyribonucleoside 5'-monophosphates to yield deoxyribose 5-phosphate and a purine or pyrimidine base. This chain is Putative 2'-deoxynucleoside 5'-phosphate N-hydrolase 1, found in Trichoplax adhaerens (Trichoplax reptans).